The sequence spans 70 residues: Putative membrane protein insertion efficiency factor (70 aa).

The protein belongs to the UPF0161 family.

The protein localises to the cell membrane. In terms of biological role, could be involved in insertion of integral membrane proteins into the membrane. In Finegoldia magna (strain ATCC 29328 / DSM 20472 / WAL 2508) (Peptostreptococcus magnus), this protein is Putative membrane protein insertion efficiency factor.